The chain runs to 439 residues: Histidine--tRNA ligase (439 aa).

The protein belongs to the class-II aminoacyl-tRNA synthetase family. As to quaternary structure, homodimer.

The protein localises to the cytoplasm. The catalysed reaction is tRNA(His) + L-histidine + ATP = L-histidyl-tRNA(His) + AMP + diphosphate + H(+). The protein is Histidine--tRNA ligase of Leptospira borgpetersenii serovar Hardjo-bovis (strain L550).